The chain runs to 72 residues: Alpha-elapitoxin-Dpp2d (72 aa).

Cystine bridges form between cysteine 3/cysteine 21, cysteine 14/cysteine 42, cysteine 27/cysteine 31, cysteine 46/cysteine 57, and cysteine 58/cysteine 63. Arginine amide is present on arginine 72.

It belongs to the three-finger toxin family. Long-chain subfamily. Type II alpha-neurotoxin sub-subfamily. Monomer (predominant). Post-translationally, amidation does not significantly affect toxin selectivity, since the activity profile and binding data are reminiscent of classical long-chain 3-finger toxins with a free carboxyl termini. As to expression, expressed by the venom gland.

It is found in the secreted. Its function is as follows. Binds with high affinity to muscular (IC(50)=114 nM) and neuronal (alpha-7/CHRNA7) (IC(50)=58 nM) nicotinic acetylcholine receptor (nAChR) and inhibits acetylcholine from binding to the receptor, thereby impairing neuromuscular and neuronal transmission. Competitive radioligand binding assays also demonstrate that this toxin competes with epibatidine binding to the Lymnaea stagnalis acetylcholine-binding protein (Ls-AChBP) (IC(50)=4.9 nM). The sequence is that of Alpha-elapitoxin-Dpp2d from Dendroaspis polylepis polylepis (Black mamba).